We begin with the raw amino-acid sequence, 128 residues long: Putative pre-16S rRNA nuclease (128 aa).

Belongs to the YqgF nuclease family.

Its subcellular location is the cytoplasm. In terms of biological role, could be a nuclease involved in processing of the 5'-end of pre-16S rRNA. The chain is Putative pre-16S rRNA nuclease from Sulfurovum sp. (strain NBC37-1).